The following is a 1222-amino-acid chain: MSQPPPPPPPLPPPPPPPEAPQTPSSLASAAASGGLLKRRDRRILSGSCPDPKCQARLFFPASGSVSIECTECGQRHEQQQLLGVEEVTDPDVVLHNLLRNALLGVTGAPKKNTELVKVMGLSNYHCKLLSPILARYGMDKQTGRAKLLRDMNQGELFDCALLGDRAFLIEPEHVNTVGYGKDRSGSLLYLHDTLEDIKRANKSQECLIPVHVDGDGHCLVHAVSRALVGRELFWHALRENLKQHFQQHLARYQALFHDFIDAAEWEDIINECDPLFVPPEGVPLGLRNIHIFGLANVLHRPIILLDSLSGMRSSGDYSATFLPGLIPAEKCTGKDGHLNKPICIAWSSSGRNHYIPLVGIKGAALPKLPMNLLPKAWGVPQDLIKKYIKLEEDGGCVIGGDRSLQDKYLLRLVAAMEEVFMDKHGIHPSLVADVHQYFYRRTGVIGVQPEEVTAAAKKAVMDNRLHKCLLCGALSELHVPPEWLAPGGKLYNLAKSTHGQLRTDKNYSFPLNNLVCSYDSVKDVLVPDYGMSNLTACNWCHGTSVRKVRGDGSIVYLDGDRTNSRSTGGKCGCGFKHFWDGKEYDNLPEAFPITLEWGGRVVRETVYWFQYESDSSLNSNVYDVAMKLVTKHFPGEFGSEILVQKVVHTILHQTAKKNPDDYTPVNIDGAHAQRVGDVQGQESESQLPTKIILTGQKTKTLHKEELNMSKTERTIQQNITEQASVMQKRKTEKLKQEQKGQPRTVSPSTIRDGPSSAPATPTKAPYSPTTSKEKKIRITTNDGRQSMVTLKSSTTFFELQESIAREFNIPPYLQCIRYGFPPKELMPPQAGMEKEPVPLQHGDRITIEILKSKAEGGQSAAAHSAHTVKQEDIAVTGKLSSKELQEQAEKEMYSLCLLATLMGEDVWSYAKGLPHMFQQGGVFYSIMKKTMGMADGKHCTFPHLPGKTFVYNASEDRLELCVDAAGHFPIGPDVEDLVKEAVSQVRAEATTRSRESSPSHGLLKLGSGGVVKKKSEQLHNVTAFQGKGHSLGTASGNPHLDPRARETSVVRKHNTGTDFSNSSTKTEPSVFTASSSNSELIRIAPGVVTMRDGRQLDPDLVEAQRKKLQEMVSSIQASMDRHLRDQSTEQSPSDLPQRKTEVVSSSAKSGSLQTGLPESFPLTGGTENLNTETTDGCVADALGAAFATRSKAQRGNSVEELEEMDSQDAEMTNTTEPMDHS.

Pro residues predominate over residues 1 to 21 (MSQPPPPPPPLPPPPPPPEAP). The interval 1-36 (MSQPPPPPPPLPPPPPPPEAPQTPSSLASAAASGGL) is disordered. Positions 25–36 (SSLASAAASGGL) are enriched in low complexity. Residues 208 to 361 (LIPVHVDGDG…RNHYIPLVGI (154 aa)) enclose the OTU domain. Aspartate 216 is a catalytic residue. Cysteine 219 acts as the Nucleophile in catalysis. Residue histidine 354 is part of the active site. Lysine 408 bears the N6-acetyllysine mark. Disordered stretches follow at residues 725-776 (SVMQ…KEKK), 989-1009 (EATT…LGSG), and 1024-1074 (AFQG…VFTA). A phosphoserine mark is found at serine 747 and serine 757. Low complexity predominate over residues 755 to 771 (PSSAPATPTKAPYSPTT). Threonine 763 is subject to Phosphothreonine. 3 positions are modified to phosphoserine: serine 768, serine 994, and serine 998. Basic and acidic residues predominate over residues 1041-1050 (LDPRARETSV). Residues 1057-1074 (GTDFSNSSTKTEPSVFTA) show a composition bias toward polar residues. A Phosphoserine modification is found at serine 1077. Disordered regions lie at residues 1113 to 1175 (VSSI…TETT) and 1188 to 1222 (ATRS…MDHS). Residues 1143-1157 (VVSSSAKSGSLQTGL) show a composition bias toward polar residues. Residues 1163 to 1175 (LTGGTENLNTETT) are compositionally biased toward low complexity. Residue serine 1198 is modified to Phosphoserine. Acidic residues predominate over residues 1200-1209 (EELEEMDSQD). Residue serine 1207 is modified to Phosphoserine; by ATM. Residues 1210–1222 (AEMTNTTEPMDHS) show a composition bias toward polar residues.

As to quaternary structure, binds VCP and the ternary complex containing STX5A, NSFL1C and VCP. Post-translationally, phosphorylated at Ser-1207 by ATM or ATR following induction of covalent DNA-protein cross-links (DPCs).

It localises to the nucleus. Its subcellular location is the cytoplasm. The protein localises to the endoplasmic reticulum. The protein resides in the golgi apparatus. It is found in the golgi stack. It carries out the reaction Thiol-dependent hydrolysis of ester, thioester, amide, peptide and isopeptide bonds formed by the C-terminal Gly of ubiquitin (a 76-residue protein attached to proteins as an intracellular targeting signal).. Its function is as follows. Deubiquitinating enzyme involved in DNA repair and reassembly of the Golgi apparatus and the endoplasmic reticulum following mitosis. Necessary for VCP-mediated reassembly of Golgi stacks after mitosis. Plays a role in VCP-mediated formation of transitional endoplasmic reticulum (tER). Mediates dissociation of the ternary complex containing STX5A, NSFL1C and VCP. Also involved in DNA repair following phosphorylation by ATM or ATR: acts by catalyzing deubiquitination of SPRTN, thereby promoting SPRTN recruitment to chromatin and subsequent proteolytic cleavage of covalent DNA-protein cross-links (DPCs). Hydrolyzes 'Lys-11'- and 'Lys-48'-linked polyubiquitin chains. Functionally, (Microbial infection) Regulates the duration of C.botulinum neurotoxin type A (BoNT/A) intoxication by catalyzing deubiquitination of Botulinum neurotoxin A light chain (LC), thereby preventing LC degradation by the proteasome, and accelerating botulinum neurotoxin intoxication in patients. The chain is Deubiquitinating protein VCPIP1 from Homo sapiens (Human).